We begin with the raw amino-acid sequence, 345 residues long: 3-dehydroquinate synthase (345 aa).

NAD(+) contacts are provided by residues 62–67 (DGEEYK), 96–100 (GVISD), 120–121 (TT), K133, K142, and 160–163 (FLKT). Residues E175, H233, and H250 each coordinate Zn(2+).

Belongs to the sugar phosphate cyclases superfamily. Dehydroquinate synthase family. It depends on Co(2+) as a cofactor. The cofactor is Zn(2+). Requires NAD(+) as cofactor.

The protein localises to the cytoplasm. The catalysed reaction is 7-phospho-2-dehydro-3-deoxy-D-arabino-heptonate = 3-dehydroquinate + phosphate. Its pathway is metabolic intermediate biosynthesis; chorismate biosynthesis; chorismate from D-erythrose 4-phosphate and phosphoenolpyruvate: step 2/7. In terms of biological role, catalyzes the conversion of 3-deoxy-D-arabino-heptulosonate 7-phosphate (DAHP) to dehydroquinate (DHQ). This is 3-dehydroquinate synthase from Campylobacter concisus (strain 13826).